A 456-amino-acid polypeptide reads, in one-letter code: Crinkler effector protein 2 (456 aa).

The signal sequence occupies residues 1–17; sequence MVKLVCAIVGVAGSAFP. The tract at residues 18-54 is LQLFLAK domain; it reads VDTDASQLVGDLKKAIKAENAMTFTGDAKDLQLFLAK. Residues 55–136 form a DWL domain region; that stretch reads QPVDDESGKE…NMELPSSEQI (82 aa). The HVLVXXP motif motif lies at 137 to 143; that stretch reads HVLVVVP. Asn-338 carries N-linked (GlcNAc...) asparagine glycosylation.

It belongs to the Crinkler effector family.

It is found in the secreted. The protein resides in the host nucleus. Secreted effector that effector that induces cell death when expressed in host plants. Induces the expression of defense response genes in tomato. The chain is Crinkler effector protein 2 from Phytophthora infestans (Potato late blight agent).